The following is a 198-amino-acid chain: Dual specificity protein phosphatase 13B (198 aa).

Residues 45 to 193 enclose the Tyrosine-protein phosphatase domain; it reads HIDEVWPSLF…LQVLDNRLGR (149 aa). Residue cysteine 138 is the Phosphocysteine intermediate of the active site.

The protein belongs to the protein-tyrosine phosphatase family. Non-receptor class dual specificity subfamily. As to expression, highly expressed in the testis (at protein level). Also found in the skeletal muscle.

It carries out the reaction O-phospho-L-tyrosyl-[protein] + H2O = L-tyrosyl-[protein] + phosphate. The enzyme catalyses O-phospho-L-seryl-[protein] + H2O = L-seryl-[protein] + phosphate. The catalysed reaction is O-phospho-L-threonyl-[protein] + H2O = L-threonyl-[protein] + phosphate. Functionally, dual specificity phosphatase that dephosphorylates MAPK8/JNK and MAPK14/p38, but not MAPK1/ERK2, in vitro. Exhibits intrinsic phosphatase activity towards both phospho-seryl/threonyl and -tyrosyl residues, with similar specific activities in vitro. This chain is Dual specificity protein phosphatase 13B, found in Homo sapiens (Human).